Reading from the N-terminus, the 133-residue chain is Egg protein CP422 (133 aa).

Positions 1 to 21 (MHECMIVFFIFAVVSIYYADA) are cleaved as a signal peptide. 3 disulfides stabilise this stretch: Cys107–Cys121, Cys114–Cys125, and Cys120–Cys130.

It localises to the secreted. The polypeptide is Egg protein CP422 (CP422) (Schistosoma japonicum (Blood fluke)).